The sequence spans 369 residues: uncharacterized protein (369 aa).

This sequence belongs to the Gfo/Idh/MocA family.

This is an uncharacterized protein from Schizosaccharomyces pombe (strain 972 / ATCC 24843) (Fission yeast).